The primary structure comprises 952 residues: Probable outer membrane protein pmp16 (952 aa).

The first 27 residues, 1–27 (MSKTPPKFLFYLGNFTACMFGMTPAVY), serve as a signal peptide directing secretion. Residues 646–952 (GDLATTPLWQ…HLQAGSTLKF (307 aa)) enclose the Autotransporter domain.

The protein belongs to the PMP outer membrane protein family.

The protein localises to the secreted. The protein resides in the cell wall. It localises to the cell outer membrane. The chain is Probable outer membrane protein pmp16 (pmp16) from Chlamydia pneumoniae (Chlamydophila pneumoniae).